The sequence spans 168 residues: Putative ankyrin repeat protein RBE_1411 (168 aa).

ANK repeat units follow at residues 59 to 88 (TIFS…LQHK), 98 to 127 (YGDT…DLTI), and 131 to 160 (KGET…ILGN).

In Rickettsia bellii (strain RML369-C), this protein is Putative ankyrin repeat protein RBE_1411.